We begin with the raw amino-acid sequence, 789 residues long: Molybdenum cofactor sulfurase (789 aa).

Position 251 is an N6-(pyridoxal phosphate)lysine (Lys-251). The active site involves Cys-422. The 162-residue stretch at 628–789 (GDQVAQWLDQ…LICGETLEVD (162 aa)) folds into the MOSC domain. At Ser-741 the chain carries Phosphoserine.

This sequence belongs to the class-V pyridoxal-phosphate-dependent aminotransferase family. MOCOS subfamily. The cofactor is pyridoxal 5'-phosphate.

It catalyses the reaction Mo-molybdopterin + L-cysteine + AH2 = thio-Mo-molybdopterin + L-alanine + A + H2O. Its pathway is cofactor biosynthesis; molybdopterin biosynthesis. Functionally, sulfurates the molybdenum cofactor. Sulfation of molybdenum is essential for xanthine dehydrogenase (XDH) and aldehyde oxidase (ADO) enzymes in which molybdenum cofactor is liganded by 1 oxygen and 1 sulfur atom in active form. This is Molybdenum cofactor sulfurase from Drosophila willistoni (Fruit fly).